The following is a 337-amino-acid chain: Large ribosomal subunit protein uL3 (337 aa).

A disordered region spans residues 1-20 (MASIHRPKRGSLAFSPRKRA).

Belongs to the universal ribosomal protein uL3 family. As to quaternary structure, part of the 50S ribosomal subunit. Forms a cluster with proteins L14 and L24e.

In terms of biological role, one of the primary rRNA binding proteins, it binds directly near the 3'-end of the 23S rRNA, where it nucleates assembly of the 50S subunit. The polypeptide is Large ribosomal subunit protein uL3 (Methanosarcina acetivorans (strain ATCC 35395 / DSM 2834 / JCM 12185 / C2A)).